We begin with the raw amino-acid sequence, 277 residues long: 3-methyl-2-oxobutanoate hydroxymethyltransferase (277 aa).

Positions 42 and 81 each coordinate Mg(2+). Residues 42-43, Asp81, and Lys110 each bind 3-methyl-2-oxobutanoate; that span reads DS. Glu112 serves as a coordination point for Mg(2+). Glu179 (proton acceptor) is an active-site residue.

This sequence belongs to the PanB family. In terms of assembly, homodecamer; pentamer of dimers. The cofactor is Mg(2+).

It is found in the cytoplasm. It catalyses the reaction 3-methyl-2-oxobutanoate + (6R)-5,10-methylene-5,6,7,8-tetrahydrofolate + H2O = 2-dehydropantoate + (6S)-5,6,7,8-tetrahydrofolate. Its pathway is cofactor biosynthesis; (R)-pantothenate biosynthesis; (R)-pantoate from 3-methyl-2-oxobutanoate: step 1/2. In terms of biological role, catalyzes the reversible reaction in which hydroxymethyl group from 5,10-methylenetetrahydrofolate is transferred onto alpha-ketoisovalerate to form ketopantoate. The chain is 3-methyl-2-oxobutanoate hydroxymethyltransferase from Anaplasma marginale (strain St. Maries).